Here is a 382-residue protein sequence, read N- to C-terminus: Mucosal addressin cell adhesion molecule 1 (382 aa).

A signal peptide spans 1-18 (MDFGLALLLAGLLGLLLG). Over 19-317 (QSLQVKPLQV…TGSSKPAGDQ (299 aa)) the chain is Extracellular. 2 consecutive Ig-like domains span residues 23 to 112 (VKPL…LLVY) and 113 to 231 (AFPD…TSPE). Intrachain disulfides connect C47–C94, C51–C98, and C134–C204. An N-linked (GlcNAc...) asparagine glycan is attached at N83. A disordered region spans residues 223-314 (VLHSPTSPEP…VIPTGSSKPA (92 aa)). The interval 226-317 (SPTSPEPPDT…TGSSKPAGDQ (92 aa)) is mucin-like. Residues 228-231 (TSPE) form a 1; truncated repeat. Residues 228–271 (TSPEPPDTTSPESPDTTSPESPDTTSQEPPDTTSPEPPDKTSPE) form a 5.5 X 8 AA tandem repeats of [PS]-P-D-T-T-S-[QP]-E region. 5 consecutive repeat copies span residues 232 to 239 (PPDTTSPE), 240 to 247 (SPDTTSPE), 248 to 255 (SPDTTSQE), 256 to 263 (PPDTTSPE), and 264 to 271 (PPDKTSPE). A compositionally biased stretch (low complexity) spans 236 to 261 (TSPESPDTTSPESPDTTSQEPPDTTS). Residues 277 to 288 (GSTHTPRSPGST) are compositionally biased toward low complexity. A helical membrane pass occupies residues 318 to 338 (LPAALWTSSAVLGLLLLALPT). Residues 339-382 (YHLWKRCRHLAEDDTHPPASLRLLPQVSAWAGLRGTGQVGISPS) lie on the Cytoplasmic side of the membrane.

In terms of assembly, homodimer. The Ser/Thr-rich mucin-like domain may provide possible sites for O-glycosylation. Highly expressed on high endothelial venules (HEV) and lamina propia venules found in the small intestine, and to a lesser extent in the colon and spleen. Very low levels of expression found in pancreas and brain. Not expressed in the thymus, prostate, ovaries, testis, heart, placenta, lung, liver, skeletal muscle, kidney or peripheral blood leukocytes.

Its subcellular location is the membrane. In terms of biological role, cell adhesion leukocyte receptor expressed by mucosal venules, helps to direct lymphocyte traffic into mucosal tissues including the Peyer patches and the intestinal lamina propria. It can bind both integrin alpha-4/beta-7 and L-selectin, regulating both the passage and retention of leukocytes. Isoform 2, lacking the mucin-like domain, may be specialized in supporting integrin alpha-4/beta-7-dependent adhesion strengthening, independent of L-selectin binding. The protein is Mucosal addressin cell adhesion molecule 1 (MADCAM1) of Homo sapiens (Human).